A 461-amino-acid chain; its full sequence is Siroheme synthase (461 aa).

A precorrin-2 dehydrogenase /sirohydrochlorin ferrochelatase region spans residues 1–204 (MRYLPLFVYL…GNFRKANRVI (204 aa)). NAD(+) contacts are provided by residues 22 to 23 (IV) and 43 to 44 (KT). S128 bears the Phosphoserine mark. The interval 218-461 (GSVSLVGAGP…HNEISWFGNG (244 aa)) is uroporphyrinogen-III C-methyltransferase. P227 is an S-adenosyl-L-methionine binding site. Catalysis depends on D250, which acts as the Proton acceptor. K272 acts as the Proton donor in catalysis. S-adenosyl-L-methionine contacts are provided by residues 303 to 305 (GGD), I308, M386, and G415.

It in the N-terminal section; belongs to the precorrin-2 dehydrogenase / sirohydrochlorin ferrochelatase family. In the C-terminal section; belongs to the precorrin methyltransferase family.

The catalysed reaction is uroporphyrinogen III + 2 S-adenosyl-L-methionine = precorrin-2 + 2 S-adenosyl-L-homocysteine + H(+). It carries out the reaction precorrin-2 + NAD(+) = sirohydrochlorin + NADH + 2 H(+). The enzyme catalyses siroheme + 2 H(+) = sirohydrochlorin + Fe(2+). The protein operates within cofactor biosynthesis; adenosylcobalamin biosynthesis; precorrin-2 from uroporphyrinogen III: step 1/1. Its pathway is cofactor biosynthesis; adenosylcobalamin biosynthesis; sirohydrochlorin from precorrin-2: step 1/1. It functions in the pathway porphyrin-containing compound metabolism; siroheme biosynthesis; precorrin-2 from uroporphyrinogen III: step 1/1. It participates in porphyrin-containing compound metabolism; siroheme biosynthesis; siroheme from sirohydrochlorin: step 1/1. The protein operates within porphyrin-containing compound metabolism; siroheme biosynthesis; sirohydrochlorin from precorrin-2: step 1/1. Multifunctional enzyme that catalyzes the SAM-dependent methylations of uroporphyrinogen III at position C-2 and C-7 to form precorrin-2 via precorrin-1. Then it catalyzes the NAD-dependent ring dehydrogenation of precorrin-2 to yield sirohydrochlorin. Finally, it catalyzes the ferrochelation of sirohydrochlorin to yield siroheme. This is Siroheme synthase from Blochmanniella floridana.